A 92-amino-acid chain; its full sequence is Acylphosphatase (92 aa).

Positions 6–92 constitute an Acylphosphatase-like domain; sequence RMYVIVYGIV…TGEFASFDTY (87 aa). Catalysis depends on residues arginine 21 and asparagine 39.

Belongs to the acylphosphatase family.

The catalysed reaction is an acyl phosphate + H2O = a carboxylate + phosphate + H(+). This Sulfolobus acidocaldarius (strain ATCC 33909 / DSM 639 / JCM 8929 / NBRC 15157 / NCIMB 11770) protein is Acylphosphatase (acyP).